The chain runs to 89 residues: Small ribosomal subunit protein uS15 (89 aa).

The protein belongs to the universal ribosomal protein uS15 family. In terms of assembly, part of the 30S ribosomal subunit. Forms a bridge to the 50S subunit in the 70S ribosome, contacting the 23S rRNA.

Functionally, one of the primary rRNA binding proteins, it binds directly to 16S rRNA where it helps nucleate assembly of the platform of the 30S subunit by binding and bridging several RNA helices of the 16S rRNA. Its function is as follows. Forms an intersubunit bridge (bridge B4) with the 23S rRNA of the 50S subunit in the ribosome. The sequence is that of Small ribosomal subunit protein uS15 from Ureaplasma parvum serovar 3 (strain ATCC 27815 / 27 / NCTC 11736).